We begin with the raw amino-acid sequence, 607 residues long: Kelch repeat and BTB domain-containing protein 3 (607 aa).

Residues 48–115 (YDFKIIMKEE…AYTGKTRITD (68 aa)) enclose the BTB domain. In terms of domain architecture, BACK spans 150–250 (CLHLLSLSDS…QLSEDTLQDY (101 aa)). 5 Kelch repeats span residues 291-337 (KYIF…SSYG), 339-390 (KIFL…TPRT), 400-450 (RLFV…ACQN), 452-502 (IYVL…KAVP), and 548-595 (KIYI…VIQF).

This Mus musculus (Mouse) protein is Kelch repeat and BTB domain-containing protein 3.